The chain runs to 1175 residues: Structural maintenance of chromosomes protein 2-1 (1175 aa).

The Zinc-hook domain occupies 2–1161 (HIKEICLEGF…NVLFRTKFVD (1160 aa)). An ATP-binding site is contributed by 32 to 39 (GLNGSGKS). Residues 172–508 (RMYENKKEAA…AQLANFQFTY (337 aa)) adopt a coiled-coil conformation. The region spanning 518–638 (SKVKGVVAKL…KTTDVAKEVA (121 aa)) is the SMC hinge domain. Residues 673-1028 (LRKLHDLAEA…ELDEKKKETL (356 aa)) are a coiled coil.

This sequence belongs to the SMC family. SMC2 subfamily. In terms of assembly, forms a heterodimer with SMC4. Component of the condensin complex, which contains the SMC2 and SMC4 heterodimer, and three non SMC subunits that probably regulate the complex: CAPH, CAPD2 and CAPG. Highly expressed in roots and young floral buds.

It localises to the nucleus. In terms of biological role, central component of the condensin complex, a complex required for conversion of interphase chromatin into mitotic-like condense chromosomes. The condensin complex probably introduces positive supercoils into relaxed DNA in the presence of type I topoisomerases and converts nicked DNA into positive knotted forms in the presence of type II topoisomerases. Also involved in chromosome segregation in meiosis. The polypeptide is Structural maintenance of chromosomes protein 2-1 (SMC2-1) (Arabidopsis thaliana (Mouse-ear cress)).